The primary structure comprises 201 residues: Holliday junction branch migration complex subunit RuvA (201 aa).

Residues 1–64 (MIGRLYGKII…EDAHLLFGFA (64 aa)) are domain I. The tract at residues 65-143 (QKQDRTLFRE…GIAQTDFFVE (79 aa)) is domain II. The segment at 144 to 154 (HSHETMVATYE) is flexible linker. The tract at residues 154–201 (EIDASEEARDALLALGYKLTDAEKMIKKVHKSGATSEQLIRDALKASL) is domain III.

This sequence belongs to the RuvA family. In terms of assembly, homotetramer. Forms an RuvA(8)-RuvB(12)-Holliday junction (HJ) complex. HJ DNA is sandwiched between 2 RuvA tetramers; dsDNA enters through RuvA and exits via RuvB. An RuvB hexamer assembles on each DNA strand where it exits the tetramer. Each RuvB hexamer is contacted by two RuvA subunits (via domain III) on 2 adjacent RuvB subunits; this complex drives branch migration. In the full resolvosome a probable DNA-RuvA(4)-RuvB(12)-RuvC(2) complex forms which resolves the HJ.

It is found in the cytoplasm. The RuvA-RuvB-RuvC complex processes Holliday junction (HJ) DNA during genetic recombination and DNA repair, while the RuvA-RuvB complex plays an important role in the rescue of blocked DNA replication forks via replication fork reversal (RFR). RuvA specifically binds to HJ cruciform DNA, conferring on it an open structure. The RuvB hexamer acts as an ATP-dependent pump, pulling dsDNA into and through the RuvAB complex. HJ branch migration allows RuvC to scan DNA until it finds its consensus sequence, where it cleaves and resolves the cruciform DNA. This Haemophilus ducreyi (strain 35000HP / ATCC 700724) protein is Holliday junction branch migration complex subunit RuvA.